Reading from the N-terminus, the 480-residue chain is Glutamyl-tRNA(Gln) amidotransferase subunit A (480 aa).

Residues lysine 76 and serine 151 each act as charge relay system in the active site. The Acyl-ester intermediate role is filled by serine 175.

The protein belongs to the amidase family. GatA subfamily. In terms of assembly, heterotrimer of A, B and C subunits.

The enzyme catalyses L-glutamyl-tRNA(Gln) + L-glutamine + ATP + H2O = L-glutaminyl-tRNA(Gln) + L-glutamate + ADP + phosphate + H(+). Functionally, allows the formation of correctly charged Gln-tRNA(Gln) through the transamidation of misacylated Glu-tRNA(Gln) in organisms which lack glutaminyl-tRNA synthetase. The reaction takes place in the presence of glutamine and ATP through an activated gamma-phospho-Glu-tRNA(Gln). This chain is Glutamyl-tRNA(Gln) amidotransferase subunit A, found in Exiguobacterium sibiricum (strain DSM 17290 / CCUG 55495 / CIP 109462 / JCM 13490 / 255-15).